Here is a 170-residue protein sequence, read N- to C-terminus: Large ribosomal subunit protein uL11 (170 aa).

The protein belongs to the universal ribosomal protein uL11 family. As to quaternary structure, part of the ribosomal stalk of the 50S ribosomal subunit. Interacts with L10 and the large rRNA to form the base of the stalk. L10 forms an elongated spine to which L12 dimers bind in a sequential fashion forming a multimeric L10(L12)X complex.

Its function is as follows. Forms part of the ribosomal stalk which helps the ribosome interact with GTP-bound translation factors. The sequence is that of Large ribosomal subunit protein uL11 from Desulfurococcus amylolyticus (strain DSM 18924 / JCM 16383 / VKM B-2413 / 1221n) (Desulfurococcus kamchatkensis).